A 169-amino-acid polypeptide reads, in one-letter code: Small ribosomal subunit protein bS16 (169 aa).

The disordered stretch occupies residues 114-169 (AEGPTAEAITEKRRKAKEEAEAKAAAEAEAAEKAEAEAAEKAAAEAAEESEEASAE). Basic and acidic residues predominate over residues 129-156 (AKEEAEAKAAAEAEAAEKAEAEAAEKAA). Residues 159 to 169 (AAEESEEASAE) are compositionally biased toward acidic residues.

Belongs to the bacterial ribosomal protein bS16 family.

This is Small ribosomal subunit protein bS16 from Corynebacterium urealyticum (strain ATCC 43042 / DSM 7109).